The primary structure comprises 294 residues: uncharacterized protein (294 aa).

The segment at 181 to 204 is disordered; it reads DEPFPTTKNHNNDKRETNDKDDQQ. Positions 190 to 204 are enriched in basic and acidic residues; that stretch reads HNNDKRETNDKDDQQ.

The protein belongs to the IIV-6 391R family.

This is an uncharacterized protein from Acheta domesticus (House cricket).